Consider the following 302-residue polypeptide: Pyridoxal 5'-phosphate synthase subunit PdxS (302 aa).

D32 is a D-ribose 5-phosphate binding site. The active-site Schiff-base intermediate with D-ribose 5-phosphate is K89. Residue G161 participates in D-ribose 5-phosphate binding. R173 contributes to the D-glyceraldehyde 3-phosphate binding site. D-ribose 5-phosphate contacts are provided by residues G222 and 243–244 (GS). Residues 275–302 (IAKNPGKGMKGQANADLDEEEQLQGRGV) form a disordered region.

Belongs to the PdxS/SNZ family. In terms of assembly, in the presence of PdxT, forms a dodecamer of heterodimers.

The catalysed reaction is aldehydo-D-ribose 5-phosphate + D-glyceraldehyde 3-phosphate + L-glutamine = pyridoxal 5'-phosphate + L-glutamate + phosphate + 3 H2O + H(+). It participates in cofactor biosynthesis; pyridoxal 5'-phosphate biosynthesis. In terms of biological role, catalyzes the formation of pyridoxal 5'-phosphate from ribose 5-phosphate (RBP), glyceraldehyde 3-phosphate (G3P) and ammonia. The ammonia is provided by the PdxT subunit. Can also use ribulose 5-phosphate and dihydroxyacetone phosphate as substrates, resulting from enzyme-catalyzed isomerization of RBP and G3P, respectively. This Haloarcula marismortui (strain ATCC 43049 / DSM 3752 / JCM 8966 / VKM B-1809) (Halobacterium marismortui) protein is Pyridoxal 5'-phosphate synthase subunit PdxS.